The chain runs to 219 residues: Thiamine-phosphate synthase (219 aa).

4-amino-2-methyl-5-(diphosphooxymethyl)pyrimidine contacts are provided by residues 44 to 48 and Asn79; that span reads QFREK. The Mg(2+) site is built by Asp80 and Asp99. Ser117 is a 4-amino-2-methyl-5-(diphosphooxymethyl)pyrimidine binding site. 2-[(2R,5Z)-2-carboxy-4-methylthiazol-5(2H)-ylidene]ethyl phosphate is bound at residue 143 to 145; it reads TST. A 4-amino-2-methyl-5-(diphosphooxymethyl)pyrimidine-binding site is contributed by Lys146. 2-[(2R,5Z)-2-carboxy-4-methylthiazol-5(2H)-ylidene]ethyl phosphate is bound by residues Gly175 and 195 to 196; that span reads IS.

Belongs to the thiamine-phosphate synthase family. Mg(2+) serves as cofactor.

It carries out the reaction 2-[(2R,5Z)-2-carboxy-4-methylthiazol-5(2H)-ylidene]ethyl phosphate + 4-amino-2-methyl-5-(diphosphooxymethyl)pyrimidine + 2 H(+) = thiamine phosphate + CO2 + diphosphate. It catalyses the reaction 2-(2-carboxy-4-methylthiazol-5-yl)ethyl phosphate + 4-amino-2-methyl-5-(diphosphooxymethyl)pyrimidine + 2 H(+) = thiamine phosphate + CO2 + diphosphate. The catalysed reaction is 4-methyl-5-(2-phosphooxyethyl)-thiazole + 4-amino-2-methyl-5-(diphosphooxymethyl)pyrimidine + H(+) = thiamine phosphate + diphosphate. It participates in cofactor biosynthesis; thiamine diphosphate biosynthesis; thiamine phosphate from 4-amino-2-methyl-5-diphosphomethylpyrimidine and 4-methyl-5-(2-phosphoethyl)-thiazole: step 1/1. In terms of biological role, condenses 4-methyl-5-(beta-hydroxyethyl)thiazole monophosphate (THZ-P) and 2-methyl-4-amino-5-hydroxymethyl pyrimidine pyrophosphate (HMP-PP) to form thiamine monophosphate (TMP). The chain is Thiamine-phosphate synthase from Bacillus cereus (strain 03BB102).